We begin with the raw amino-acid sequence, 51 residues long: MFRWAIIFAVIALLASLLGFGGVAGLSQNFAYIFLVVAVILFIIGFISRRT.

The next 2 membrane-spanning stretches (helical) occupy residues 6-26 (IIFA…VAGL) and 27-47 (SQNF…IGFI).

This sequence belongs to the UPF0391 family.

It is found in the cell membrane. This chain is UPF0391 membrane protein PsycPRwf_2202, found in Psychrobacter sp. (strain PRwf-1).